A 101-amino-acid polypeptide reads, in one-letter code: Small ribosomal subunit protein uS14 (101 aa).

Belongs to the universal ribosomal protein uS14 family. As to quaternary structure, part of the 30S ribosomal subunit. Contacts proteins S3 and S10.

Its function is as follows. Binds 16S rRNA, required for the assembly of 30S particles and may also be responsible for determining the conformation of the 16S rRNA at the A site. The protein is Small ribosomal subunit protein uS14 of Roseobacter denitrificans (strain ATCC 33942 / OCh 114) (Erythrobacter sp. (strain OCh 114)).